The primary structure comprises 768 residues: DNA ligase (768 aa).

Residues 30–34 (DAEYD), 79–80 (SL), and glutamate 190 each bind NAD(+). Lysine 192 acts as the N6-AMP-lysine intermediate in catalysis. NAD(+) is bound by residues arginine 213, glutamate 250, lysine 367, and lysine 391. Residues cysteine 485, cysteine 488, cysteine 503, and cysteine 509 each coordinate Zn(2+). Residues 678-767 (AAEQPLSGLS…IPPEIQARMQ (90 aa)) form the BRCT domain.

This sequence belongs to the NAD-dependent DNA ligase family. LigA subfamily. The cofactor is Mg(2+). Mn(2+) is required as a cofactor.

It carries out the reaction NAD(+) + (deoxyribonucleotide)n-3'-hydroxyl + 5'-phospho-(deoxyribonucleotide)m = (deoxyribonucleotide)n+m + AMP + beta-nicotinamide D-nucleotide.. Functionally, DNA ligase that catalyzes the formation of phosphodiester linkages between 5'-phosphoryl and 3'-hydroxyl groups in double-stranded DNA using NAD as a coenzyme and as the energy source for the reaction. It is essential for DNA replication and repair of damaged DNA. The sequence is that of DNA ligase from Magnetococcus marinus (strain ATCC BAA-1437 / JCM 17883 / MC-1).